Consider the following 272-residue polypeptide: L-aspartate dehydrogenase 3 (272 aa).

NAD(+)-binding residues include A126 and N194. H224 is an active-site residue.

The protein belongs to the L-aspartate dehydrogenase family.

The catalysed reaction is L-aspartate + NADP(+) + H2O = oxaloacetate + NH4(+) + NADPH + H(+). It carries out the reaction L-aspartate + NAD(+) + H2O = oxaloacetate + NH4(+) + NADH + H(+). The protein operates within cofactor biosynthesis; NAD(+) biosynthesis; iminoaspartate from L-aspartate (dehydrogenase route): step 1/1. In terms of biological role, specifically catalyzes the NAD or NADP-dependent dehydrogenation of L-aspartate to iminoaspartate. The polypeptide is L-aspartate dehydrogenase 3 (Bordetella bronchiseptica (strain ATCC BAA-588 / NCTC 13252 / RB50) (Alcaligenes bronchisepticus)).